We begin with the raw amino-acid sequence, 443 residues long: ATP-dependent protease ATPase subunit HslU (443 aa).

Residues I20, 62 to 67 (GVGKTE), D255, E321, and R393 contribute to the ATP site.

This sequence belongs to the ClpX chaperone family. HslU subfamily. In terms of assembly, a double ring-shaped homohexamer of HslV is capped on each side by a ring-shaped HslU homohexamer. The assembly of the HslU/HslV complex is dependent on binding of ATP.

Its subcellular location is the cytoplasm. ATPase subunit of a proteasome-like degradation complex; this subunit has chaperone activity. The binding of ATP and its subsequent hydrolysis by HslU are essential for unfolding of protein substrates subsequently hydrolyzed by HslV. HslU recognizes the N-terminal part of its protein substrates and unfolds these before they are guided to HslV for hydrolysis. This chain is ATP-dependent protease ATPase subunit HslU, found in Helicobacter pylori (strain ATCC 700392 / 26695) (Campylobacter pylori).